Reading from the N-terminus, the 317-residue chain is 4-hydroxy-3-methylbut-2-enyl diphosphate reductase (317 aa).

Cysteine 12 lines the [4Fe-4S] cluster pocket. Positions 41 and 74 each coordinate (2E)-4-hydroxy-3-methylbut-2-enyl diphosphate. Dimethylallyl diphosphate-binding residues include histidine 41 and histidine 74. Residues histidine 41 and histidine 74 each contribute to the isopentenyl diphosphate site. Cysteine 97 contributes to the [4Fe-4S] cluster binding site. Histidine 125 provides a ligand contact to (2E)-4-hydroxy-3-methylbut-2-enyl diphosphate. Histidine 125 is a dimethylallyl diphosphate binding site. Residue histidine 125 participates in isopentenyl diphosphate binding. The active-site Proton donor is glutamate 127. Residue threonine 168 participates in (2E)-4-hydroxy-3-methylbut-2-enyl diphosphate binding. A [4Fe-4S] cluster-binding site is contributed by cysteine 198. Positions 226, 227, 228, and 270 each coordinate (2E)-4-hydroxy-3-methylbut-2-enyl diphosphate. Dimethylallyl diphosphate is bound by residues serine 226, serine 227, asparagine 228, and serine 270. Residues serine 226, serine 227, asparagine 228, and serine 270 each coordinate isopentenyl diphosphate.

This sequence belongs to the IspH family. As to quaternary structure, homodimer. [4Fe-4S] cluster is required as a cofactor.

It catalyses the reaction isopentenyl diphosphate + 2 oxidized [2Fe-2S]-[ferredoxin] + H2O = (2E)-4-hydroxy-3-methylbut-2-enyl diphosphate + 2 reduced [2Fe-2S]-[ferredoxin] + 2 H(+). It carries out the reaction dimethylallyl diphosphate + 2 oxidized [2Fe-2S]-[ferredoxin] + H2O = (2E)-4-hydroxy-3-methylbut-2-enyl diphosphate + 2 reduced [2Fe-2S]-[ferredoxin] + 2 H(+). Its pathway is isoprenoid biosynthesis; dimethylallyl diphosphate biosynthesis; dimethylallyl diphosphate from (2E)-4-hydroxy-3-methylbutenyl diphosphate: step 1/1. It participates in isoprenoid biosynthesis; isopentenyl diphosphate biosynthesis via DXP pathway; isopentenyl diphosphate from 1-deoxy-D-xylulose 5-phosphate: step 6/6. In terms of biological role, catalyzes the conversion of 1-hydroxy-2-methyl-2-(E)-butenyl 4-diphosphate (HMBPP) into a mixture of isopentenyl diphosphate (IPP) and dimethylallyl diphosphate (DMAPP). Acts in the terminal step of the DOXP/MEP pathway for isoprenoid precursor biosynthesis. In Serratia proteamaculans (strain 568), this protein is 4-hydroxy-3-methylbut-2-enyl diphosphate reductase.